We begin with the raw amino-acid sequence, 64 residues long: Large ribosomal subunit protein bL35 (64 aa).

This sequence belongs to the bacterial ribosomal protein bL35 family.

The polypeptide is Large ribosomal subunit protein bL35 (Streptomyces coelicolor (strain ATCC BAA-471 / A3(2) / M145)).